A 117-amino-acid chain; its full sequence is Large ribosomal subunit protein bL20 (117 aa).

Belongs to the bacterial ribosomal protein bL20 family.

Its function is as follows. Binds directly to 23S ribosomal RNA and is necessary for the in vitro assembly process of the 50S ribosomal subunit. It is not involved in the protein synthesizing functions of that subunit. The chain is Large ribosomal subunit protein bL20 from Vibrio campbellii (strain ATCC BAA-1116).